Reading from the N-terminus, the 448-residue chain is Exodeoxyribonuclease 7 large subunit (448 aa).

The protein belongs to the XseA family. As to quaternary structure, heterooligomer composed of large and small subunits.

It localises to the cytoplasm. The enzyme catalyses Exonucleolytic cleavage in either 5'- to 3'- or 3'- to 5'-direction to yield nucleoside 5'-phosphates.. In terms of biological role, bidirectionally degrades single-stranded DNA into large acid-insoluble oligonucleotides, which are then degraded further into small acid-soluble oligonucleotides. The polypeptide is Exodeoxyribonuclease 7 large subunit (Bacillus pumilus (strain SAFR-032)).